A 473-amino-acid chain; its full sequence is uncharacterized protein (473 aa).

The segment at 1–86 (MSSSPTESEI…NTSNYGSSRD (86 aa)) is disordered. Residues 10 to 19 (ILPKESHNSI) show a composition bias toward basic and acidic residues. Polar residues-rich tracts occupy residues 20 to 39 (DEQS…NSFN) and 55 to 68 (EPVQ…PNMA). At Ser-64 the chain carries Phosphoserine. The segment covering 69-83 (SNESGNSENTSNYGS) has biased composition (low complexity). 3 consecutive RRM domains span residues 95-165 (LWMG…NHLF), 188-260 (IFVG…PIRV), and 305-370 (VFVG…RIRL). The disordered stretch occupies residues 448–473 (MHIPENGNSDTMPVPNTQGKHLSAEE). Residues 453-467 (NGNSDTMPVPNTQGK) show a composition bias toward polar residues.

This is an uncharacterized protein from Schizosaccharomyces pombe (strain 972 / ATCC 24843) (Fission yeast).